The following is a 521-amino-acid chain: MEELQLQGYLEKDGSRQQNFLYPLIFQEYIYTLAHDHGLNSSIFYEPMEIVGLGYDNKSSSVLVKRLITRMYQQNSLIYSMNDFNQNRFVGHNNSFYSNFDSQMVSEGFAVIVEIPFSLRLVPSSEEIQIPKSQNLRSIHSIFPFLEDKLSHLNYVLDILIPYPIHLEILVQILQCWIQDVPSLHFLRFFLHEFHNWNNLNLITPTKSISVFSKENKRLFWILYNSYVSEYEFLFVFLRKQSYYLRSTSSRAFLERTHFYVKIEHLIDVCHNHFQKILWFFKDSFMHYVRYKGKAILASRGTYLLIKKWKCYLVNFWQYNFHFWSKPYRIHINPFSNYSFYFLGYISSVLINPSAVKNQMLENFYLVDTLTQKFDTIVPVIPLIGSLSKAKFCTILGHPISKPIWAELSDSDIMDRFGRICRNLSHYHSGSSKKQSLYRIKYILRLSCARTLARKHKSTVRNLLQRLGSGLLEEFFTEEEQVISPIFPKTTLFPLHGSHRERIWYLDIIRINDLANYLDWS.

Belongs to the intron maturase 2 family. MatK subfamily.

It localises to the plastid. It is found in the chloroplast. In terms of biological role, usually encoded in the trnK tRNA gene intron. Probably assists in splicing its own and other chloroplast group II introns. The chain is Maturase K from Trillium catesbaei (Catesby's trillium).